The chain runs to 352 residues: MASRCKIHLTVAYLLILCILASAQSKQMTTETVVLNVTALSEINQTKYNVQINLNIGLLDNDIFINGAPLKPSGVTRMTCPALLLDGYNVSSGNSVDGLVSCELRLMVNQSYVQSDAAEQLLFLVLSQEIIQLADEKVQQPEISEVEIMWNQSSEQMTQVTSIYPSARSKLSIIPRENDVLVTDASVQSAVEDQVRNTTSHYLLKNSETTQEEIAAPGKLPETPLRMDPETLYESREEEERRSDSLLLEPPLSGSMSSYSVACQWVEKLRDKLRRFLSDSVPLFFLVMWVVVVGVAGSAVVIKILDLIFPSCEHRGFFHLNPETLMPDDEKVSLIDNMEGDMTEKSILLIEK.

The N-terminal stretch at 1-25 is a signal peptide; it reads MASRCKIHLTVAYLLILCILASAQS. Topologically, residues 26 to 281 are extracellular; sequence KQMTTETVVL…KLRRFLSDSV (256 aa). 6 N-linked (GlcNAc...) asparagine glycosylation sites follow: N36, N44, N89, N109, N151, and N197. Residues 206 to 245 are disordered; sequence NSETTQEEIAAPGKLPETPLRMDPETLYESREEEERRSDS. Residues 225–244 show a composition bias toward basic and acidic residues; it reads LRMDPETLYESREEEERRSD. A helical membrane pass occupies residues 282-302; the sequence is PLFFLVMWVVVVGVAGSAVVI. Topologically, residues 303 to 352 are cytoplasmic; the sequence is KILDLIFPSCEHRGFFHLNPETLMPDDEKVSLIDNMEGDMTEKSILLIEK.

Its subcellular location is the membrane. This Danio rerio (Zebrafish) protein is Glycoprotein integral membrane protein 1 (ginm1).